The sequence spans 189 residues: Glucose-6-phosphate isomerase (189 aa).

Fe cation is bound by residues His88, His90, Glu97, and His136.

This sequence belongs to the archaeal-type GPI family. In terms of assembly, homodimer. It depends on Fe cation as a cofactor.

It localises to the cytoplasm. It carries out the reaction alpha-D-glucose 6-phosphate = beta-D-fructose 6-phosphate. It participates in carbohydrate degradation; glycolysis; D-glyceraldehyde 3-phosphate and glycerone phosphate from D-glucose: step 2/4. The polypeptide is Glucose-6-phosphate isomerase (pgiA) (Pyrococcus abyssi (strain GE5 / Orsay)).